A 150-amino-acid chain; its full sequence is Catabolic 3-dehydroquinase (150 aa).

Residue Tyr-24 is the Proton acceptor of the active site. Asn-75, His-81, and Asp-88 together coordinate substrate. The active-site Proton donor is the His-101. Substrate-binding positions include 102-103 (VS) and Arg-112.

Belongs to the type-II 3-dehydroquinase family. As to quaternary structure, homododecamer. Adopts a ring-like structure, composed of an arrangement of two hexameric rings stacked on top of one another.

The catalysed reaction is 3-dehydroquinate = 3-dehydroshikimate + H2O. The protein operates within aromatic compound metabolism; 3,4-dihydroxybenzoate biosynthesis; 3,4-dihydroxybenzoate from 3-dehydroquinate: step 1/2. Is involved in the catabolism of quinate. Allows the utilization of quinate as carbon source via the beta-ketoadipate pathway. This chain is Catabolic 3-dehydroquinase, found in Aspergillus clavatus (strain ATCC 1007 / CBS 513.65 / DSM 816 / NCTC 3887 / NRRL 1 / QM 1276 / 107).